An 858-amino-acid polypeptide reads, in one-letter code: Leucine--tRNA ligase (858 aa).

Positions 53–63 (PYPSGNLHMGH) match the 'HIGH' region motif. The 'KMSKS' region motif lies at 622-626 (KMSKS). Lys-625 serves as a coordination point for ATP.

Belongs to the class-I aminoacyl-tRNA synthetase family.

Its subcellular location is the cytoplasm. It catalyses the reaction tRNA(Leu) + L-leucine + ATP = L-leucyl-tRNA(Leu) + AMP + diphosphate. The polypeptide is Leucine--tRNA ligase (Prochlorococcus marinus subsp. pastoris (strain CCMP1986 / NIES-2087 / MED4)).